The chain runs to 462 residues: 3-ketoacyl CoA thiolase 1, peroxisomal (462 aa).

A peroxisome-targeting transit peptide spans 1-34; that stretch reads MEKAIQRQRVLLEHLQPIRHHTHDHSSSLTTSIC. The active-site Acyl-thioester intermediate is Cys-138. Residues His-393 and Cys-425 each act as proton acceptor in the active site. Gly-427 provides a ligand contact to substrate.

This sequence belongs to the thiolase-like superfamily. Thiolase family. Homodimer.

It is found in the peroxisome. It catalyses the reaction an acyl-CoA + acetyl-CoA = a 3-oxoacyl-CoA + CoA. The protein operates within aromatic compound metabolism. It functions in the pathway lipid metabolism; fatty acid metabolism. Functionally, component of the floral volatile benzenoid/phenylpropanoid (FVBP) biosynthetic pathway. Thiolase that catalyzes the conversion of 3-oxo-3-phenylpropionyl-CoA (benzoylacetyl-CoA) to benzoyl-CoA. This is 3-ketoacyl CoA thiolase 1, peroxisomal from Petunia hybrida (Petunia).